Reading from the N-terminus, the 163-residue chain is Ribonuclease H (163 aa).

The RNase H type-1 domain maps to 16–157 (TTSPVEIYCD…CDSLARQAIT (142 aa)). Mg(2+) contacts are provided by D25, E63, D85, and D149.

It belongs to the RNase H family. Monomer. Mg(2+) is required as a cofactor.

Its subcellular location is the cytoplasm. The catalysed reaction is Endonucleolytic cleavage to 5'-phosphomonoester.. In terms of biological role, endonuclease that specifically degrades the RNA of RNA-DNA hybrids. The chain is Ribonuclease H from Pelobacter propionicus (strain DSM 2379 / NBRC 103807 / OttBd1).